The sequence spans 61 residues: Short neurotoxin 1 (61 aa).

Residues 1-16 (LECHNQQSSQPPTTKS) show a composition bias toward polar residues. The interval 1 to 20 (LECHNQQSSQPPTTKSCPGD) is disordered. Cystine bridges form between cysteine 3–cysteine 23, cysteine 17–cysteine 40, cysteine 42–cysteine 53, and cysteine 54–cysteine 59.

This sequence belongs to the three-finger toxin family. Short-chain subfamily. Type I alpha-neurotoxin sub-subfamily. As to expression, expressed by the venom gland.

It localises to the secreted. In terms of biological role, binds to muscle nicotinic acetylcholine receptor (nAChR) and inhibit acetylcholine from binding to the receptor, thereby impairing neuromuscular transmission. The protein is Short neurotoxin 1 of Hemachatus haemachatus (Rinkhals).